The chain runs to 260 residues: Acetylglutamate kinase (260 aa).

Substrate-binding positions include 41 to 42, R63, and N157; that span reads GG.

Belongs to the acetylglutamate kinase family. ArgB subfamily.

The protein localises to the cytoplasm. It carries out the reaction N-acetyl-L-glutamate + ATP = N-acetyl-L-glutamyl 5-phosphate + ADP. Its pathway is amino-acid biosynthesis; L-arginine biosynthesis; N(2)-acetyl-L-ornithine from L-glutamate: step 2/4. In terms of biological role, catalyzes the ATP-dependent phosphorylation of N-acetyl-L-glutamate. This Acidobacterium capsulatum (strain ATCC 51196 / DSM 11244 / BCRC 80197 / JCM 7670 / NBRC 15755 / NCIMB 13165 / 161) protein is Acetylglutamate kinase.